The sequence spans 336 residues: Phosphate acyltransferase (336 aa).

This sequence belongs to the PlsX family. As to quaternary structure, homodimer. Probably interacts with PlsY.

It localises to the cytoplasm. The enzyme catalyses a fatty acyl-[ACP] + phosphate = an acyl phosphate + holo-[ACP]. It participates in lipid metabolism; phospholipid metabolism. Its function is as follows. Catalyzes the reversible formation of acyl-phosphate (acyl-PO(4)) from acyl-[acyl-carrier-protein] (acyl-ACP). This enzyme utilizes acyl-ACP as fatty acyl donor, but not acyl-CoA. The chain is Phosphate acyltransferase from Pseudomonas fluorescens (strain ATCC BAA-477 / NRRL B-23932 / Pf-5).